The chain runs to 663 residues: UvrABC system protein B (663 aa).

The segment covering 1–10 has biased composition (basic and acidic residues); that stretch reads MIDKRDDKPF. A disordered region spans residues 1–23; that stretch reads MIDKRDDKPFKLKSKYKPSGDQP. In terms of domain architecture, Helicase ATP-binding spans 31-418; the sequence is DNIEGGEKAQ…TNTIIEQIIR (388 aa). An ATP-binding site is contributed by 44 to 51; the sequence is GATGTGKT. The Beta-hairpin signature appears at 97 to 120; sequence YYDYYQPEAYVPSSDTYIEKDSSV. The region spanning 435-601 is the Helicase C-terminal domain; the sequence is QMDDLLGEIN…TIKKDIRGLI (167 aa). One can recognise a UVR domain in the interval 627–662; sequence KEAINALQKQMQEAAELLDFELAAQMRDLILELKLM.

It belongs to the UvrB family. In terms of assembly, forms a heterotetramer with UvrA during the search for lesions. Interacts with UvrC in an incision complex.

It is found in the cytoplasm. In terms of biological role, the UvrABC repair system catalyzes the recognition and processing of DNA lesions. A damage recognition complex composed of 2 UvrA and 2 UvrB subunits scans DNA for abnormalities. Upon binding of the UvrA(2)B(2) complex to a putative damaged site, the DNA wraps around one UvrB monomer. DNA wrap is dependent on ATP binding by UvrB and probably causes local melting of the DNA helix, facilitating insertion of UvrB beta-hairpin between the DNA strands. Then UvrB probes one DNA strand for the presence of a lesion. If a lesion is found the UvrA subunits dissociate and the UvrB-DNA preincision complex is formed. This complex is subsequently bound by UvrC and the second UvrB is released. If no lesion is found, the DNA wraps around the other UvrB subunit that will check the other stand for damage. The protein is UvrABC system protein B of Streptococcus pyogenes serotype M6 (strain ATCC BAA-946 / MGAS10394).